The primary structure comprises 60 residues: Potassium channel toxin-like Tx677 (60 aa).

The first 22 residues, 1–22 (MKISALVMITLLICSMMILCQG), serve as a signal peptide directing secretion. Disulfide bonds link Cys30/Cys51, Cys36/Cys56, and Cys40/Cys58.

The protein belongs to the short scorpion toxin superfamily. Potassium channel inhibitor family. As to expression, expressed by the venom gland.

The protein resides in the secreted. In terms of biological role, weakly inhibits Kv11.1/KCNH2/ERG1, Kv1.2/KCNA2 and Kv1.3/KCNA3 voltage-gated potassium channels. This chain is Potassium channel toxin-like Tx677, found in Buthus israelis (Israeli scorpion).